The chain runs to 394 residues: Phloroisovalerophenone synthase (394 aa).

Cys-166 is an active-site residue.

It belongs to the thiolase-like superfamily. Chalcone/stilbene synthases family. As to quaternary structure, homodimer. In terms of tissue distribution, expressed in lupulin gland. Present at low levels in leaves but accumulates in cones.

It carries out the reaction 3-methylbutanoyl-CoA + 3 malonyl-CoA + 3 H(+) = phlorisovalerophenone + 3 CO2 + 4 CoA. It catalyses the reaction (E)-4-coumaroyl-CoA + 3 malonyl-CoA + 3 H(+) = 2',4,4',6'-tetrahydroxychalcone + 3 CO2 + 4 CoA. The catalysed reaction is 2-methylpropanoyl-CoA + 3 malonyl-CoA + 3 H(+) = phlorisobutanophenone + 3 CO2 + 4 CoA. Its pathway is secondary metabolite biosynthesis. Functionally, involved in the biosynthesis of prenylated phenolics natural products which contribute to the bitter taste of beer and display broad biological activities. Polyketide synthase that can use 3-methylbutanoyl-CoA (isovaleryl-CoA) and 2-methylpropanoyl-CoA (isobutyryl-CoA) as substrates to produce phlorisovalerophenone (PIVP) and phlorisobutyrophenone (2-methyl-1-(2,4,6-trihydroxyphenyl)propan-1-one), respectively, intermediates in the biosynthesis of the bitter acids (alpha and beta) acids. Can also produce naringenin-chalcone (2',4,4',6'-tetrahydroxychalcone) from 4-coumaroyl-CoA with a lower efficiency. This chain is Phloroisovalerophenone synthase, found in Humulus lupulus (European hop).